The primary structure comprises 405 residues: Replication factor C large subunit (405 aa).

47–54 (GPPGVGKT) serves as a coordination point for ATP.

The protein belongs to the activator 1 small subunits family. RfcL subfamily. As to quaternary structure, heteromultimer composed of small subunits (RfcS) and large subunits (RfcL).

In terms of biological role, part of the RFC clamp loader complex which loads the PCNA sliding clamp onto DNA. This Saccharolobus islandicus (strain M.16.27) (Sulfolobus islandicus) protein is Replication factor C large subunit.